A 563-amino-acid chain; its full sequence is Arginine--tRNA ligase (563 aa).

Positions Pro-121 to His-131 match the 'HIGH' region motif.

Belongs to the class-I aminoacyl-tRNA synthetase family. Monomer.

It localises to the cytoplasm. The enzyme catalyses tRNA(Arg) + L-arginine + ATP = L-arginyl-tRNA(Arg) + AMP + diphosphate. The sequence is that of Arginine--tRNA ligase (argS) from Streptococcus pneumoniae serotype 4 (strain ATCC BAA-334 / TIGR4).